The sequence spans 1030 residues: Putative pentatricopeptide repeat-containing protein At5g06400, mitochondrial (1030 aa).

The transit peptide at M1–R77 directs the protein to the mitochondrion. 19 PPR repeats span residues R188–K222, D223–L257, D258–F292, G293–I323, E328–L362, D363–R393, D397–P431, R432–P466, D467–P501, T502–I536, N677–I711, T712–P746, S747–P783, D784–I814, V818–L852, D853–P887, G888–P922, S923–P957, and D958–P992.

Belongs to the PPR family. P subfamily.

Its subcellular location is the mitochondrion. This chain is Putative pentatricopeptide repeat-containing protein At5g06400, mitochondrial, found in Arabidopsis thaliana (Mouse-ear cress).